The primary structure comprises 209 residues: Bacteriorhodopsin (209 aa).

A helical membrane pass occupies residues 1–17 (LWLGTAGMFLGMLYFIA). At 18 to 31 (RGWGETDGRRQKFY) the chain is on the cytoplasmic side. Residues 32–50 (IATILITAIAFVNYLAMAL) traverse the membrane as a helical segment. Residues 51–66 (GFGLTFIEFGGEQHPI) lie on the Extracellular side of the membrane. The chain crosses the membrane as a helical span at residues 67-84 (YWARYTDWLFTTPLLLYD). The Cytoplasmic portion of the chain corresponds to 85-95 (LGLLAGADRNT). A helical transmembrane segment spans residues 96 to 115 (IYSLVSLDVLMIGTGVVATL). Residues 116–128 (SAGSGVLSAGAER) lie on the Extracellular side of the membrane. The chain crosses the membrane as a helical span at residues 129 to 148 (LVWWGISTAFLLVLLYFLFS). Residues 149–166 (SLSGRVANLPSDTRSTFK) are Cytoplasmic-facing. A helical membrane pass occupies residues 167–185 (TLRNLVTVVWLVYPVWWLV). Residues 186–197 (GSEGLGLVGIGI) are Extracellular-facing. Residues 198-209 (ETAGFMVIDLVA) form a helical membrane-spanning segment.

This sequence belongs to the archaeal/bacterial/fungal opsin family.

Its subcellular location is the cell membrane. Light-driven proton pump. The sequence is that of Bacteriorhodopsin (bop) from Halobacterium halobium (strain shark).